The primary structure comprises 466 residues: Rho GTPase-activating protein 1 (466 aa).

2 disordered regions span residues 1–31 and 65–84; these read MTEV…SLSY and EEQD…DDGG. Residues 8-31 are compositionally biased toward low complexity; sequence PSSPSASHSSSSSSSSPSPSSLSY. Residues 65-74 are compositionally biased toward basic and acidic residues; the sequence is EEQDLRRRSS. A CRIB domain is found at 117–130; the sequence is IGWPTNVRHVAHVT. The 181-residue stretch at 162–342 folds into the Rho-GAP domain; it reads VSTESMQLSY…TLIEKTLRER (181 aa). Residues 354–402 form a disordered region; it reads PLEPSDESGHQSPSQSLAFNTSEQSEETQSDNIENAENQSSSSEISDEL. Polar residues-rich tracts occupy residues 363–376 and 383–397; these read HQSP…NTSE and SDNI…SSSE.

In terms of biological role, acts as a GTPase activator for the Rac-type GTPase by converting it to an inactive GDP-bound state. This chain is Rho GTPase-activating protein 1 (ROPGAP1), found in Arabidopsis thaliana (Mouse-ear cress).